We begin with the raw amino-acid sequence, 83 residues long: Salivary thrombin inhibitor anophelin (83 aa).

Positions methionine 1–alanine 22 are cleaved as a signal peptide. Residues glutamine 25–isoleucine 51 are disordered. A glycan (N-linked (GlcNAc...) asparagine) is linked at asparagine 47. Residues glutamate 54 to proline 83 form a sufficient for host thrombin inhibition region. Residues tyrosine 56–serine 62 form a blocks exosite I of host thrombin region. Positions serine 64–proline 83 are disordered. The blocks active site cleft of host thrombin in a reverse direction compared to substrates stretch occupies residues aspartate 72–arginine 75. Residues proline 73 to proline 83 show a composition bias toward basic and acidic residues.

This sequence belongs to the anophelin family. In terms of assembly, interacts with human F2 (thrombin); the interaction results in thrombin inhibition. Salivary gland (at protein level).

Its subcellular location is the secreted. Increasing concentration of NaCl decreases affinity for thrombin. Its function is as follows. Salivary protein with anticoagulant activity that inhibits host thrombin (F2); binds to the proteinase in a reverse orientation (opposite to substrates). Inhibits thrombin-induced platelet aggregation. This Anopheles albimanus (New world malaria mosquito) protein is Salivary thrombin inhibitor anophelin.